The following is a 618-amino-acid chain: Chaperone protein DnaK (618 aa).

Thr-175 carries the phosphothreonine; by autocatalysis modification. Residues 579–618 (GAPGAEGFDSNMAGEANAGQNANNDDNVVDADYKVEDDEK) form a disordered region. Residues 591–604 (AGEANAGQNANNDD) are compositionally biased toward low complexity.

It belongs to the heat shock protein 70 family.

Acts as a chaperone. The sequence is that of Chaperone protein DnaK from Clostridium tetani (strain Massachusetts / E88).